A 71-amino-acid chain; its full sequence is uncharacterized protein (71 aa).

The segment at 1-71 (MLFETLKSLS…AFFSRPFYSE (71 aa)) is disordered. Over residues 7 to 33 (KSLSQQNGGQFSDEQSFESPISSSFNG) the composition is skewed to polar residues. The segment covering 35-65 (SMPFGSPSSTMSSSYKGNTNSSTKSSSAFFS) has biased composition (low complexity).

This is an uncharacterized protein from Dictyostelium discoideum (Social amoeba).